The primary structure comprises 57 residues: Small polypeptide DEVIL 20 (57 aa).

A glycan (N-linked (GlcNAc...) asparagine) is linked at N5. The tract at residues 16 to 47 is required for DVL/RTFL small polypeptide activity; it reads TFKAKCSHMVRKQRAKFYILGRCLAMLVCGRG. Residues 29–45 form a helical membrane-spanning segment; that stretch reads RAKFYILGRCLAMLVCG.

It belongs to the DVL/RTFL small polypeptides family.

The protein localises to the cell membrane. Small polypeptide acting as a regulatory molecule which coordinates cellular responses required for differentiation, growth and development, probably by restricting polar cell proliferation in lateral organs and coordinating socket cell recruitment and differentiation at trichome sites. This is Small polypeptide DEVIL 20 from Arabidopsis thaliana (Mouse-ear cress).